The chain runs to 382 residues: uncharacterized protein (382 aa).

A run of 12 helical transmembrane segments spans residues 14–34, 45–65, 79–99, 102–122, 131–151, 157–177, 204–224, 236–256, 265–285, 289–309, 325–345, and 349–369; these read GLLLLTLAIAVLNTLVPLWLA, MVSSSYFTGNLVGTLLTGYLI, LVFAAGCLGLGLMIGFWSWMA, FVAGVGCAMIWVVVESALMCS, LLAAYMMIYYVGTFLGQLLVS, LMNVLPWVTALILAGILPLLF, LGVNGCIISGIVLGSLYGLMP, NIGFWMAVLVSAGIVGQWPIG, LLVLRVQIFVVILGSIAMLTH, APALFILGAAGFTLYPVAMAW, ALLLSYTIGSLLGPSFTAMLM, and SDNLLFIMIASVSFIYLLMLL.

The protein belongs to the major facilitator superfamily. YcaD (TC 2.A.1.26) family.

It is found in the cell inner membrane. This is an uncharacterized protein from Escherichia fergusonii (strain ATCC 35469 / DSM 13698 / CCUG 18766 / IAM 14443 / JCM 21226 / LMG 7866 / NBRC 102419 / NCTC 12128 / CDC 0568-73).